We begin with the raw amino-acid sequence, 600 residues long: Elongation factor 4 (600 aa).

The tr-type G domain occupies 4-186 (SKIRNFSIIA…EIVKKIPAPQ (183 aa)). GTP is bound by residues 16–21 (DHGKST) and 133–136 (NKID).

The protein belongs to the TRAFAC class translation factor GTPase superfamily. Classic translation factor GTPase family. LepA subfamily.

It is found in the cell inner membrane. The enzyme catalyses GTP + H2O = GDP + phosphate + H(+). Functionally, required for accurate and efficient protein synthesis under certain stress conditions. May act as a fidelity factor of the translation reaction, by catalyzing a one-codon backward translocation of tRNAs on improperly translocated ribosomes. Back-translocation proceeds from a post-translocation (POST) complex to a pre-translocation (PRE) complex, thus giving elongation factor G a second chance to translocate the tRNAs correctly. Binds to ribosomes in a GTP-dependent manner. The chain is Elongation factor 4 from Trichlorobacter lovleyi (strain ATCC BAA-1151 / DSM 17278 / SZ) (Geobacter lovleyi).